Consider the following 318-residue polypeptide: Protein W (318 aa).

Disordered stretches follow at residues 1 to 23 (MDQDAFILKEDSEVEREAPGGRE) and 38 to 318 (SEPT…KKGA). The segment covering 7-20 (ILKEDSEVEREAPG) has biased composition (basic and acidic residues). Polar residues predominate over residues 50–59 (LHNTINTPQG). Position 68 is a phosphoserine; by host (S68). Residues 83 to 101 (RSGEESRVSGRTSKPEAEA) show a composition bias toward basic and acidic residues. A Phosphoserine; by host modification is found at S125. A compositionally biased stretch (basic and acidic residues) spans 150-168 (GIEDENREMAAHPDKRGED). A compositionally biased stretch (polar residues) spans 191-206 (ASNNGRSMEPGSSHSA). 4 positions are modified to phosphoserine; by host: S192, S249, S257, and S260.

This Sendai virus (strain Fushimi) (SeV) protein is Protein W (P/V/C).